Consider the following 451-residue polypeptide: UPF0210 protein NGO_1297 (451 aa).

This sequence belongs to the UPF0210 family. As to quaternary structure, homodimer.

This Neisseria gonorrhoeae (strain ATCC 700825 / FA 1090) protein is UPF0210 protein NGO_1297.